Here is a 1180-residue protein sequence, read N- to C-terminus: Pesticidal crystal protein Cry4Aa (1180 aa).

The protein belongs to the delta endotoxin family.

In terms of biological role, promotes colloidosmotic lysis by binding to the midgut epithelial cells of insects. The polypeptide is Pesticidal crystal protein Cry4Aa (cry4Aa) (Bacillus thuringiensis subsp. israelensis).